The chain runs to 178 residues: Cell division protein ZapC (178 aa).

It belongs to the ZapC family. Interacts directly with FtsZ.

Its subcellular location is the cytoplasm. Functionally, contributes to the efficiency of the cell division process by stabilizing the polymeric form of the cell division protein FtsZ. Acts by promoting interactions between FtsZ protofilaments and suppressing the GTPase activity of FtsZ. This chain is Cell division protein ZapC, found in Aeromonas hydrophila subsp. hydrophila (strain ATCC 7966 / DSM 30187 / BCRC 13018 / CCUG 14551 / JCM 1027 / KCTC 2358 / NCIMB 9240 / NCTC 8049).